The following is a 99-amino-acid chain: Prostate and testis expressed protein 14 (99 aa).

Residues 1–21 form the signal peptide; the sequence is MEKYLLLLLLGIFLRVGFLQA. Residues 22-99 enclose the UPAR/Ly6 domain; it reads LTCVSCGRLN…CDHQNLCNKP (78 aa). Disulfide bonds link cysteine 24–cysteine 51, cysteine 27–cysteine 36, cysteine 43–cysteine 69, cysteine 73–cysteine 89, and cysteine 90–cysteine 96. Asparagine 31 carries an N-linked (GlcNAc...) asparagine glycan. N-linked (GlcNAc...) asparagine glycosylation occurs at asparagine 75.

It belongs to the PATE family. As to quaternary structure, monomer. In terms of processing, glycosylated. Predominantly expressed in the seminal vesicles. Expressed in prostate, and to a lesser extent in the cauda epididymis.

It is found in the secreted. The protein is Prostate and testis expressed protein 14 of Mus musculus (Mouse).